A 388-amino-acid chain; its full sequence is MICRTIVEGTTKISVPIPPPDVNFPPSAAPVFYNPEMELNRDINVAATAAFVKRLLSRKDLKREEVRYVDAFSASGIRGLRIAGEVGIHSTMNDWNPEAFELIKENIKINGLEEKAQATRKNANVLLHEQKFHIVDVDPFGTPAPYLDAAATAAQGMLSVTATDTAPLCGAHLNSGIRKYAAVPLNTEYHSEMGLRVLLGACARECAKHEKGMLPLLSHVTRHYVRSYLEVLPGTKHADRALKSMGFSIYCPKCGFRGPVYGLAVHIEKECPACGALTKIAGPLWLGPFREPKFCNEVLSELEAHPLNTKEKAKKIITFCRDELDIPMFYDQHVICKELGASATGIETLIEALKAGGFEASRTHFSGTSFRTDAPIAEIKKIIQALSG.

The region spanning 4 to 383 (RTIVEGTTKI…APIAEIKKII (380 aa)) is the Trm1 methyltransferase domain. Residues arginine 41, arginine 78, aspartate 94, and alanine 123 each coordinate S-adenosyl-L-methionine. Positions 251, 254, 271, and 274 each coordinate Zn(2+).

It belongs to the class I-like SAM-binding methyltransferase superfamily. Trm1 family.

The enzyme catalyses guanosine(26) in tRNA + 2 S-adenosyl-L-methionine = N(2)-dimethylguanosine(26) in tRNA + 2 S-adenosyl-L-homocysteine + 2 H(+). In terms of biological role, dimethylates a single guanine residue at position 26 of a number of tRNAs using S-adenosyl-L-methionine as donor of the methyl groups. The sequence is that of tRNA (guanine(26)-N(2))-dimethyltransferase from Methanosarcina acetivorans (strain ATCC 35395 / DSM 2834 / JCM 12185 / C2A).